Here is a 414-residue protein sequence, read N- to C-terminus: Transforming growth factor beta-2 proprotein (414 aa).

Residues 1-19 form the signal peptide; the sequence is MHYCVLSAFLILHLVTVAL. 3 N-linked (GlcNAc...) asparagine glycosylation sites follow: Asn72, Asn140, and Asn241. 4 disulfide bridges follow: Cys309/Cys318, Cys317/Cys380, Cys346/Cys411, and Cys350/Cys413.

Belongs to the TGF-beta family. As to quaternary structure, interacts with the serine proteases, HTRA1 and HTRA3. Interacts with ASPN. Interacts with MFAP5. Interacts with Transforming growth factor beta-2 (TGF-beta-2) chain; interaction is non-covalent and maintains (TGF-beta-2) in a latent state. Interacts with LRRC32/GARP; leading to regulate activation of TGF-beta-2. Interacts with NREP; the interaction results in a decrease in TGFB2 autoinduction. In terms of assembly, transforming growth factor beta-2: Homodimer; disulfide-linked. Transforming growth factor beta-2: Interacts with TGF-beta receptors (TGFBR1 and TGFBR2), leading to signal transduction. The precursor proprotein is cleaved in the Golgi apparatus to form Transforming growth factor beta-2 (TGF-beta-2) and Latency-associated peptide (LAP) chains, which remain non-covalently linked, rendering TGF-beta-2 inactive.

Its subcellular location is the secreted. It is found in the extracellular space. The protein localises to the extracellular matrix. Its function is as follows. Precursor of the Latency-associated peptide (LAP) and Transforming growth factor beta-2 (TGF-beta-2) chains, which constitute the regulatory and active subunit of TGF-beta-2, respectively. In terms of biological role, required to maintain the Transforming growth factor beta-2 (TGF-beta-2) chain in a latent state during storage in extracellular matrix. Associates non-covalently with TGF-beta-2 and regulates its activation via interaction with 'milieu molecules', such as LTBP1 and LRRC32/GARP, that control activation of TGF-beta-2. Functionally, multifunctional protein that regulates various processes such as angiogenesis and heart development. Activation into mature form follows different steps: following cleavage of the proprotein in the Golgi apparatus, Latency-associated peptide (LAP) and Transforming growth factor beta-2 (TGF-beta-2) chains remain non-covalently linked rendering TGF-beta-2 inactive during storage in extracellular matrix. At the same time, LAP chain interacts with 'milieu molecules', such as LTBP1 and LRRC32/GARP, that control activation of TGF-beta-2 and maintain it in a latent state during storage in extracellular milieus. Once activated following release of LAP, TGF-beta-2 acts by binding to TGF-beta receptors (TGFBR1 and TGFBR2), which transduce signal. In Chlorocebus aethiops (Green monkey), this protein is Transforming growth factor beta-2 proprotein (TGFB2).